Reading from the N-terminus, the 223-residue chain is Deoxyribose-phosphate aldolase (223 aa).

Catalysis depends on D89, which acts as the Proton donor/acceptor. K154 acts as the Schiff-base intermediate with acetaldehyde in catalysis. The active-site Proton donor/acceptor is the K183.

Belongs to the DeoC/FbaB aldolase family. DeoC type 1 subfamily.

The protein localises to the cytoplasm. It catalyses the reaction 2-deoxy-D-ribose 5-phosphate = D-glyceraldehyde 3-phosphate + acetaldehyde. Its pathway is carbohydrate degradation; 2-deoxy-D-ribose 1-phosphate degradation; D-glyceraldehyde 3-phosphate and acetaldehyde from 2-deoxy-alpha-D-ribose 1-phosphate: step 2/2. Functionally, catalyzes a reversible aldol reaction between acetaldehyde and D-glyceraldehyde 3-phosphate to generate 2-deoxy-D-ribose 5-phosphate. The protein is Deoxyribose-phosphate aldolase of Thermoanaerobacter sp. (strain X514).